The sequence spans 125 residues: Type-4 ice-structuring protein (125 aa).

The signal sequence occupies residues 1–20 (MKYTLIAAIVVLALAQGTLA).

It belongs to the apolipoprotein A1/A4/E family.

Its subcellular location is the secreted. Its function is as follows. Antifreeze proteins lower the blood freezing point. This is Type-4 ice-structuring protein from Gadus morhua (Atlantic cod).